Reading from the N-terminus, the 354-residue chain is MKKIIMTGGGTAGHVTPNLALVPELKKLGYEIKYIGSIEGIERKIIEKEGIEYFPISSGKLRRYFDLKNFSDPFKVLKGVFQAKKIIKREKPDIVFSKGGFVTVPVVIAAHLNKIPVIAHESDITPGLANKLATPYCTRVCVTFPESVKHIKGDKAVLTGTPIRRELLEGNKLEGIKLCGFKDNKPILLIIGGSLGSKIINEIVRKNLDNILSKFNIIHICGKSNLDENLENRKGYAQFEYVNEELPDLMKASDLVISRAGANVIYELLALKKPNLLIPLSKKSSRGDQILNAASFEKSGYSLVLKEEELEDKTLIKKLNYLYENRNVYINNMSKSKMDNGVKNITELIKKYTK.

Residues 11 to 13 (TAG), Arg164, Ser194, and Gln289 each bind UDP-N-acetyl-alpha-D-glucosamine.

It belongs to the glycosyltransferase 28 family. MurG subfamily.

It is found in the cell membrane. It carries out the reaction di-trans,octa-cis-undecaprenyl diphospho-N-acetyl-alpha-D-muramoyl-L-alanyl-D-glutamyl-meso-2,6-diaminopimeloyl-D-alanyl-D-alanine + UDP-N-acetyl-alpha-D-glucosamine = di-trans,octa-cis-undecaprenyl diphospho-[N-acetyl-alpha-D-glucosaminyl-(1-&gt;4)]-N-acetyl-alpha-D-muramoyl-L-alanyl-D-glutamyl-meso-2,6-diaminopimeloyl-D-alanyl-D-alanine + UDP + H(+). Its pathway is cell wall biogenesis; peptidoglycan biosynthesis. Cell wall formation. Catalyzes the transfer of a GlcNAc subunit on undecaprenyl-pyrophosphoryl-MurNAc-pentapeptide (lipid intermediate I) to form undecaprenyl-pyrophosphoryl-MurNAc-(pentapeptide)GlcNAc (lipid intermediate II). This Clostridium botulinum (strain ATCC 19397 / Type A) protein is UDP-N-acetylglucosamine--N-acetylmuramyl-(pentapeptide) pyrophosphoryl-undecaprenol N-acetylglucosamine transferase.